The chain runs to 83 residues: Putative defensin-like protein 110 (83 aa).

Positions 1–24 (MAITKKNLIAFVFTILFVISYVHC) are cleaved as a signal peptide. Intrachain disulfides connect Cys-43–Cys-81, Cys-49–Cys-73, Cys-59–Cys-79, and Cys-63–Cys-80.

This sequence belongs to the DEFL family.

The protein localises to the secreted. The sequence is that of Putative defensin-like protein 110 from Arabidopsis thaliana (Mouse-ear cress).